Consider the following 457-residue polypeptide: Putative transposase y4bF (457 aa).

The Integrase catalytic domain occupies 128–313 (TFHQPRLRRE…RPLNLAPDRL (186 aa)). A disordered region spans residues 406 to 440 (QDERPAPKVRTNSEKNGYTPRGRKPGKRTDFMNDP).

This is Putative transposase y4bF from Sinorhizobium fredii (strain NBRC 101917 / NGR234).